Here is a 1025-residue protein sequence, read N- to C-terminus: RNA cytidine acetyltransferase (1025 aa).

Residue 287–296 participates in ATP binding; sequence GRGKSAALGL. Lys-426 bears the N6-acetyllysine mark. Arg-470 provides a ligand contact to ATP. The region spanning 558-753 is the N-acetyltransferase domain; sequence CLLPPVPPTQ…HSCIMLKTLT (196 aa). Acetyl-CoA is bound by residues 629–631 and 636–642; these read IAV and QGMGYGS. The interval 702-1025 is required for localization to the nucleolus and midbody; it reads PAERLDYLGV…KKDMKLKRKK (324 aa). Position 716 is a phosphothreonine (Thr-716). An acetyl-CoA-binding site is contributed by Arg-725. 3 positions are modified to phosphoserine: Ser-934, Ser-984, and Ser-987. Positions 990-1025 are disordered; the sequence is SDKKRKLEAKQEPKQSKKLKNRETKNKKDMKLKRKK. Positions 997–1018 are enriched in basic and acidic residues; it reads EAKQEPKQSKKLKNRETKNKKD.

This sequence belongs to the RNA cytidine acetyltransferase family. NAT10 subfamily. As to quaternary structure, part of the small subunit (SSU) processome, composed of more than 70 proteins and the RNA chaperone small nucleolar RNA (snoRNA) U3. Interacts with THUMPD1. Interacts with SUN1 (via N-terminus). Interacts with TERT. Post-translationally, acetylation at Lys-426 is required to activation of rRNA transcription. May be autoacetylated; however ability to autoacetylate in vivo requires additional evidences.

It localises to the nucleus. The protein resides in the nucleolus. The protein localises to the midbody. It catalyses the reaction a cytidine in 18S rRNA + acetyl-CoA + ATP + H2O = an N(4)-acetylcytidine in 18S rRNA + ADP + phosphate + CoA + H(+). The enzyme catalyses a cytidine in tRNA + acetyl-CoA + ATP + H2O = an N(4)-acetylcytidine in tRNA + ADP + phosphate + CoA + H(+). The catalysed reaction is a cytidine in mRNA + acetyl-CoA + ATP + H2O = an N(4)-acetylcytidine in mRNA + ADP + phosphate + CoA + H(+). Its activity is regulated as follows. Specifically inhibited by remodelin (4-[2-(2-cyclopentylidenehydrazinyl)-4-thiazolyl]-benzonitrile, monohydrobromide), a hydrobromide salt molecule. Remodelin can improve nuclear architecture, chromatin organization and fitness of cells from patients suffering from Hutchinson-Gilford progeria syndrome (HGPS); molecular mechanisms explaining the relation between NAT10 activity and nuclear architecture are however unclear. RNA cytidine acetyltransferase that catalyzes the formation of N(4)-acetylcytidine (ac4C) modification on mRNAs, 18S rRNA and tRNAs. Catalyzes ac4C modification of a broad range of mRNAs, enhancing mRNA stability and translation. mRNA ac4C modification is frequently present within wobble cytidine sites and promotes translation efficiency. Mediates the formation of ac4C at position 1842 in 18S rRNA. May also catalyze the formation of ac4C at position 1337 in 18S rRNA. Required for early nucleolar cleavages of precursor rRNA at sites A0, A1 and A2 during 18S rRNA synthesis. Catalyzes the formation of ac4C in serine and leucine tRNAs. Requires the tRNA-binding adapter protein THUMPD1 for full tRNA acetyltransferase activity but not for 18S rRNA acetylation. In addition to RNA acetyltransferase activity, also able to acetylate lysine residues of proteins, such as histones, microtubules, p53/TP53 and MDM2, in vitro. The relevance of the protein lysine acetyltransferase activity is however unsure in vivo. Activates telomerase activity by stimulating the transcription of TERT, and may also regulate telomerase function by affecting the balance of telomerase subunit assembly, disassembly, and localization. Involved in the regulation of centrosome duplication by acetylating CENATAC during mitosis, promoting SASS6 proteasome degradation. Part of the small subunit (SSU) processome, first precursor of the small eukaryotic ribosomal subunit. During the assembly of the SSU processome in the nucleolus, many ribosome biogenesis factors, an RNA chaperone and ribosomal proteins associate with the nascent pre-rRNA and work in concert to generate RNA folding, modifications, rearrangements and cleavage as well as targeted degradation of pre-ribosomal RNA by the RNA exosome. The polypeptide is RNA cytidine acetyltransferase (Homo sapiens (Human)).